Here is a 283-residue protein sequence, read N- to C-terminus: 4-diphosphocytidyl-2-C-methyl-D-erythritol kinase (283 aa).

The active site involves lysine 10. Position 99 to 109 (99 to 109 (PMGGGLGGGSS)) interacts with ATP. Aspartate 141 is an active-site residue.

The protein belongs to the GHMP kinase family. IspE subfamily. Homodimer.

The enzyme catalyses 4-CDP-2-C-methyl-D-erythritol + ATP = 4-CDP-2-C-methyl-D-erythritol 2-phosphate + ADP + H(+). It functions in the pathway isoprenoid biosynthesis; isopentenyl diphosphate biosynthesis via DXP pathway; isopentenyl diphosphate from 1-deoxy-D-xylulose 5-phosphate: step 3/6. Its function is as follows. Catalyzes the phosphorylation of the position 2 hydroxy group of 4-diphosphocytidyl-2C-methyl-D-erythritol. The sequence is that of 4-diphosphocytidyl-2-C-methyl-D-erythritol kinase from Escherichia coli O127:H6 (strain E2348/69 / EPEC).